We begin with the raw amino-acid sequence, 432 residues long: CinA-like protein (432 aa).

This sequence belongs to the CinA family.

The sequence is that of CinA-like protein from Colwellia psychrerythraea (strain 34H / ATCC BAA-681) (Vibrio psychroerythus).